We begin with the raw amino-acid sequence, 238 residues long: LRRN4 C-terminal-like protein (238 aa).

Positions 1–22 (MLGSPCLLWLLAVTFLVPRAQP) are cleaved as a signal peptide. Residues 23–194 (LAPQDFEEEE…RLAVPPNPRT (172 aa)) lie on the Extracellular side of the membrane. The region spanning 82-176 (PPDPPRMGEV…AGGEGLEGAD (95 aa)) is the Fibronectin type-III domain. Asn-132 carries N-linked (GlcNAc...) asparagine glycosylation. Residues 195–215 (LVHAAVGVGTALALLSCAALV) form a helical membrane-spanning segment. Over 216–238 (WHFCLRDRWGCPRRAAARAAGAL) the chain is Cytoplasmic.

The protein resides in the membrane. This is LRRN4 C-terminal-like protein (LRRN4CL) from Homo sapiens (Human).